Consider the following 177-residue polypeptide: Large ribosomal subunit protein uL6 (177 aa).

It belongs to the universal ribosomal protein uL6 family. In terms of assembly, part of the 50S ribosomal subunit.

This protein binds to the 23S rRNA, and is important in its secondary structure. It is located near the subunit interface in the base of the L7/L12 stalk, and near the tRNA binding site of the peptidyltransferase center. The sequence is that of Large ribosomal subunit protein uL6 from Vibrio campbellii (strain ATCC BAA-1116).